Here is a 156-residue protein sequence, read N- to C-terminus: Bursicon (156 aa).

The signal sequence occupies residues M1–A26. 5 disulfides stabilise this stretch: C37-C86, C51-C100, C61-C121, C65-C123, and C83-C126. The CTCK domain occupies C37 to G127.

In terms of assembly, heterodimer of burs and pburs.

Its subcellular location is the secreted. In terms of biological role, final heterodimeric neurohormone released at the end of the molting cycle, involved in the sclerotization (tanning) of the insect cuticle, melanization and wing spreading. This chain is Bursicon, found in Manduca sexta (Tobacco hawkmoth).